The following is a 742-amino-acid chain: Zinc finger protein 280C (742 aa).

Residues Lys-10, Lys-23, Lys-42, Lys-65, Lys-85, Lys-123, and Lys-135 each participate in a glycyl lysine isopeptide (Lys-Gly) (interchain with G-Cter in SUMO2) cross-link. The segment covering 138 to 168 has biased composition (polar residues); that stretch reads FTKTSPQEDSGACSVSQSDSTQDIPSSNILQ. The disordered stretch occupies residues 138–243; that stretch reads FTKTSPQEDS…QSAPGSSSLR (106 aa). Glycyl lysine isopeptide (Lys-Gly) (interchain with G-Cter in SUMO2) cross-links involve residues Lys-180, Lys-186, and Lys-193. The span at 182-191 shows a compositional bias: polar residues; sequence PSTSKVNSVN. A compositionally biased stretch (low complexity) spans 200-222; sequence SISETRPCSSSSSQTAPSGASSQ. Over residues 223–243 the composition is skewed to polar residues; the sequence is TVLSNVNTSSVQSAPGSSSLR. C2H2-type zinc fingers lie at residues 323-345, 360-383, 390-413, 420-443, and 477-499; these read FKCF…MKHH, TTCQ…ESTH, TICK…KDTH, YICQ…RSSH, and YRCP…KLEH. Residues 523–578 show a composition bias toward low complexity; the sequence is LGSSQSRASSPPSSTIPSTSLQLSVPKSKSTTTKNNSKVSANKATTTSPQTVATTT. A disordered region spans residues 523-608; that stretch reads LGSSQSRASS…YKQKRQRTRK (86 aa). Polar residues predominate over residues 579-592; it reads GKPSASKPGTGTTK. A Glycyl lysine isopeptide (Lys-Gly) (interchain with G-Cter in SUMO2) cross-link involves residue Lys-580. The segment covering 593–608 has biased composition (basic residues); that stretch reads SKAKPSYKQKRQRTRK.

The protein resides in the nucleus. In terms of biological role, may function as a transcription factor. This Mus musculus (Mouse) protein is Zinc finger protein 280C (Znf280c).